The sequence spans 89 residues: Small ribosomal subunit protein uS15 (89 aa).

It belongs to the universal ribosomal protein uS15 family. Part of the 30S ribosomal subunit. Forms a bridge to the 50S subunit in the 70S ribosome, contacting the 23S rRNA.

Its function is as follows. One of the primary rRNA binding proteins, it binds directly to 16S rRNA where it helps nucleate assembly of the platform of the 30S subunit by binding and bridging several RNA helices of the 16S rRNA. In terms of biological role, forms an intersubunit bridge (bridge B4) with the 23S rRNA of the 50S subunit in the ribosome. In Burkholderia ambifaria (strain MC40-6), this protein is Small ribosomal subunit protein uS15.